The primary structure comprises 500 residues: NAD(P)H-quinone oxidoreductase chain 4, chloroplastic (500 aa).

14 helical membrane-spanning segments follow: residues 4 to 24 (FPWLTIIVVFPIFAGSLIFFL), 35 to 55 (YTICICILELLLTTYAFCYHF), 87 to 107 (IGPILLTGFITTLATLAAWPI), 113 to 130 (LFHFLMLAMYSGQIGSFS), 134 to 154 (LLLFFIMWELELIPVYLLLCM), 167 to 187 (FILYTAGGSVFLLMGVLGVAL), 208 to 228 (VLEIIFYIGFFIAFAVKSPII), 242 to 262 (HYSTCMLLAGILLKMGAYGLI), 272 to 292 (AHSIFSPWLMIIGTIQIIYAA), 305 to 325 (IAYSSVSHMGFIIIGISSLTD), 330 to 350 (GALLQIISHGFIGAALFFLAG), 386 to 406 (LALPGMSGFVAELIVFFGIIT), 411 to 431 (LLIPKILITFVMAIGMILTPI), and 462 to 482 (LFLSISIFLPVIGIGIYPDFV).

The protein belongs to the complex I subunit 4 family.

It localises to the plastid. Its subcellular location is the chloroplast thylakoid membrane. The catalysed reaction is a plastoquinone + NADH + (n+1) H(+)(in) = a plastoquinol + NAD(+) + n H(+)(out). It carries out the reaction a plastoquinone + NADPH + (n+1) H(+)(in) = a plastoquinol + NADP(+) + n H(+)(out). The protein is NAD(P)H-quinone oxidoreductase chain 4, chloroplastic of Nicotiana tomentosiformis (Tobacco).